The primary structure comprises 83 residues: RNA-binding protein Hfq (83 aa).

Residues 9 to 69 (DYFLNQLRKD…ISTFAPARNV (61 aa)) form the Sm domain.

It belongs to the Hfq family. As to quaternary structure, homohexamer.

Functionally, RNA chaperone that binds small regulatory RNA (sRNAs) and mRNAs to facilitate mRNA translational regulation in response to envelope stress, environmental stress and changes in metabolite concentrations. Also binds with high specificity to tRNAs. In Exiguobacterium sibiricum (strain DSM 17290 / CCUG 55495 / CIP 109462 / JCM 13490 / 255-15), this protein is RNA-binding protein Hfq.